Consider the following 188-residue polypeptide: MTTRPATDRRKMPTGREEVAAAILQAATDLFAERGPAATSIRDIAARSKVNHGLVFRHFGTKDQLVGAVLDHLGTKLTRLLHSEAPADIIERALDRHGRVLARALLDGYPVGQLQQRFPNVAELLDAVRPRYDSDLGARLAVAHALALQFGWRLFAPMLRSATGIDELTGDELRLSVNDAVARILEPH.

One can recognise an HTH tetR-type domain in the interval 17–77 (EEVAAAILQA…AVLDHLGTKL (61 aa)). The H-T-H motif DNA-binding region spans 40 to 59 (SIRDIAARSKVNHGLVFRHF).

Functionally, negatively regulates the expression of sulfate ester dioxygenase Mb3440 and its own expression. The sequence is that of HTH-type transcriptional regulator Mb3439c from Mycobacterium bovis (strain ATCC BAA-935 / AF2122/97).